Here is a 542-residue protein sequence, read N- to C-terminus: Protein XP55 (542 aa).

An N-terminal signal peptide occupies residues M1–A33. C34 carries N-palmitoyl cysteine lipidation. C34 carries S-diacylglycerol cysteine lipidation. Residues L519–K542 form a disordered region.

It belongs to the bacterial solute-binding protein 5 family.

It localises to the cell membrane. In terms of biological role, required for transport of an unidentified substrate. The polypeptide is Protein XP55 (xp55) (Streptomyces lividans).